The primary structure comprises 60 residues: Large ribosomal subunit protein bL32 (60 aa).

The segment covering 1–23 (MAKHPVPKKKTSKARRDARRSHH) has biased composition (basic residues). The interval 1-28 (MAKHPVPKKKTSKARRDARRSHHALTPP) is disordered.

It belongs to the bacterial ribosomal protein bL32 family. In terms of assembly, part of the 50S ribosomal subunit.

Its function is as follows. Found on the solvent side of the large subunit. The sequence is that of Large ribosomal subunit protein bL32 (rpmF) from Thermus thermophilus (strain ATCC BAA-163 / DSM 7039 / HB27).